The following is a 579-amino-acid chain: 2-isopropylmalate synthase (579 aa).

In terms of domain architecture, Pyruvate carboxyltransferase spans 40-314; that stretch reads PRWCAVDLRD…DPMIDFSDID (275 aa). Mg(2+)-binding residues include D49, H253, H255, and N289. Residues 456–579 form a regulatory domain region; the sequence is SSKEDGQWGR…VNRAIRDAQA (124 aa).

Belongs to the alpha-IPM synthase/homocitrate synthase family. LeuA type 2 subfamily. As to quaternary structure, homodimer. Mg(2+) serves as cofactor.

The protein resides in the cytoplasm. It catalyses the reaction 3-methyl-2-oxobutanoate + acetyl-CoA + H2O = (2S)-2-isopropylmalate + CoA + H(+). It participates in amino-acid biosynthesis; L-leucine biosynthesis; L-leucine from 3-methyl-2-oxobutanoate: step 1/4. Catalyzes the condensation of the acetyl group of acetyl-CoA with 3-methyl-2-oxobutanoate (2-ketoisovalerate) to form 3-carboxy-3-hydroxy-4-methylpentanoate (2-isopropylmalate). The polypeptide is 2-isopropylmalate synthase (Arthrobacter sp. (strain FB24)).